A 148-amino-acid chain; its full sequence is UPF0756 membrane protein YeaL (148 aa).

4 consecutive transmembrane segments (helical) span residues 14 to 34 (ALGF…LIIV), 51 to 71 (LSIG…SGTL), 86 to 106 (LVAI…VTLM), and 112 to 132 (LVAG…GVPV).

Belongs to the UPF0756 family.

The protein localises to the cell membrane. The polypeptide is UPF0756 membrane protein YeaL (Escherichia coli O157:H7).